The following is a 150-amino-acid chain: Large ribosomal subunit protein bL9 (150 aa).

This sequence belongs to the bacterial ribosomal protein bL9 family.

Functionally, binds to the 23S rRNA. The chain is Large ribosomal subunit protein bL9 from Pseudoalteromonas atlantica (strain T6c / ATCC BAA-1087).